The following is a 243-amino-acid chain: Probable transcriptional regulatory protein TTE1135 (243 aa).

Belongs to the TACO1 family.

The protein resides in the cytoplasm. The chain is Probable transcriptional regulatory protein TTE1135 from Caldanaerobacter subterraneus subsp. tengcongensis (strain DSM 15242 / JCM 11007 / NBRC 100824 / MB4) (Thermoanaerobacter tengcongensis).